The sequence spans 204 residues: MQAPPSFYEGDTLVVAKKLLGHKLVHIVDGIKRSGFIVEVEAYKGPDDKAAHSYGGRRTDRTEVMFGAPGHAYVYLIYGMYHCFNVITAPIGTPQGVLIRALEPVDGIEDMKLARYNKTDITKAQYKNLTNGPGKLCRALGITLEERGVSLQSDTLHIELVPEEDHLSSTHNIIAGPRINIDYAEEAVHYPWRFYYEKHPFVSK.

It belongs to the DNA glycosylase MPG family.

The chain is Putative 3-methyladenine DNA glycosylase from Bacillus mycoides (strain KBAB4) (Bacillus weihenstephanensis).